Consider the following 500-residue polypeptide: Archaeal-type glutamate synthase [NADPH] (500 aa).

4Fe-4S ferredoxin-type domains are found at residues 7–38 (SKFI…YDED) and 40–69 (DQIK…VRNN). [4Fe-4S] cluster is bound by residues Cys-18, Cys-21, Cys-24, Cys-28, Cys-49, Cys-52, Cys-55, and Cys-59.

It belongs to the glutamate synthase family. FMN is required as a cofactor.

The catalysed reaction is 2 L-glutamate + NADP(+) = L-glutamine + 2-oxoglutarate + NADPH + H(+). In Dehalococcoides mccartyi (strain ATCC BAA-2266 / KCTC 15142 / 195) (Dehalococcoides ethenogenes (strain 195)), this protein is Archaeal-type glutamate synthase [NADPH].